We begin with the raw amino-acid sequence, 174 residues long: RNA pyrophosphohydrolase (174 aa).

A Nudix hydrolase domain is found at 6-149 (GYRPNVGIIL…KRDVYERALS (144 aa)). Positions 38–59 (GGIKPGESPEAAMYRELLEEVG) match the Nudix box motif.

Belongs to the Nudix hydrolase family. RppH subfamily. A divalent metal cation is required as a cofactor.

Accelerates the degradation of transcripts by removing pyrophosphate from the 5'-end of triphosphorylated RNA, leading to a more labile monophosphorylated state that can stimulate subsequent ribonuclease cleavage. The polypeptide is RNA pyrophosphohydrolase (Chromobacterium violaceum (strain ATCC 12472 / DSM 30191 / JCM 1249 / CCUG 213 / NBRC 12614 / NCIMB 9131 / NCTC 9757 / MK)).